A 352-amino-acid chain; its full sequence is Photosystem II D2 protein (352 aa).

The chain crosses the membrane as a helical span at residues 40-60; it reads CAFLSIGGWLTGTTFVTSWYT. His117 contributes to the chlorophyll a binding site. The chain crosses the membrane as a helical span at residues 124-140; it reads GFCLRQIEIARLVGIRP. Gln129 and Asn142 together coordinate pheophytin a. The chain crosses the membrane as a helical span at residues 152–165; sequence VFVSVFLMYPLGQS. His197 serves as a coordination point for chlorophyll a. The helical transmembrane segment at 207–227 threads the bilayer; it reads GALLCAIHGATVENTLFQDGE. A plastoquinone contacts are provided by His214 and Phe261. Residue His214 participates in Fe cation binding. Position 268 (His268) interacts with Fe cation. The chain crosses the membrane as a helical span at residues 278–294; it reads GLWMSSIGIVGLAFNLR.

It belongs to the reaction center PufL/M/PsbA/D family. In terms of assembly, PSII is composed of 1 copy each of membrane proteins PsbA, PsbB, PsbC, PsbD, PsbE, PsbF, PsbH, PsbI, PsbJ, PsbK, PsbL, PsbM, PsbT, PsbX, PsbY, PsbZ, Psb30/Ycf12, peripheral proteins PsbO, CyanoQ (PsbQ), PsbU, PsbV and a large number of cofactors. It forms dimeric complexes. Requires The D1/D2 heterodimer binds P680, chlorophylls that are the primary electron donor of PSII, and subsequent electron acceptors. It shares a non-heme iron and each subunit binds pheophytin, quinone, additional chlorophylls, carotenoids and lipids. There is also a Cl(-1) ion associated with D1 and D2, which is required for oxygen evolution. The PSII complex binds additional chlorophylls, carotenoids and specific lipids. as cofactor.

It is found in the cellular thylakoid membrane. It catalyses the reaction 2 a plastoquinone + 4 hnu + 2 H2O = 2 a plastoquinol + O2. Its function is as follows. Photosystem II (PSII) is a light-driven water:plastoquinone oxidoreductase that uses light energy to abstract electrons from H(2)O, generating O(2) and a proton gradient subsequently used for ATP formation. It consists of a core antenna complex that captures photons, and an electron transfer chain that converts photonic excitation into a charge separation. The D1/D2 (PsbA/PsbD) reaction center heterodimer binds P680, the primary electron donor of PSII as well as several subsequent electron acceptors. D2 is needed for assembly of a stable PSII complex. The protein is Photosystem II D2 protein of Trichodesmium erythraeum (strain IMS101).